A 283-amino-acid chain; its full sequence is Thymidylate synthase (283 aa).

Arg-22 contributes to the dUMP binding site. Catalysis depends on Cys-160, which acts as the Nucleophile. DUMP is bound by residues 180 to 183, Asn-191, and 221 to 223; these read RSCD and HIY. Asp-183 lines the (6R)-5,10-methylene-5,6,7,8-tetrahydrofolate pocket. Position 282 (Ser-282) interacts with (6R)-5,10-methylene-5,6,7,8-tetrahydrofolate.

This sequence belongs to the thymidylate synthase family. Bacterial-type ThyA subfamily. As to quaternary structure, homodimer.

Its subcellular location is the cytoplasm. It catalyses the reaction dUMP + (6R)-5,10-methylene-5,6,7,8-tetrahydrofolate = 7,8-dihydrofolate + dTMP. It functions in the pathway pyrimidine metabolism; dTTP biosynthesis. Functionally, catalyzes the reductive methylation of 2'-deoxyuridine-5'-monophosphate (dUMP) to 2'-deoxythymidine-5'-monophosphate (dTMP) while utilizing 5,10-methylenetetrahydrofolate (mTHF) as the methyl donor and reductant in the reaction, yielding dihydrofolate (DHF) as a by-product. This enzymatic reaction provides an intracellular de novo source of dTMP, an essential precursor for DNA biosynthesis. In Haemophilus influenzae (strain 86-028NP), this protein is Thymidylate synthase.